A 359-amino-acid chain; its full sequence is Uroporphyrinogen decarboxylase (359 aa).

Coproporphyrinogen III contacts are provided by Arg28, Ala30, Arg32, Asp79, Tyr157, Ser212, and His335.

It belongs to the uroporphyrinogen decarboxylase family. In terms of assembly, monomer.

It is found in the nucleus. Its subcellular location is the cytoplasm. It catalyses the reaction uroporphyrinogen III + 4 H(+) = coproporphyrinogen III + 4 CO2. The catalysed reaction is uroporphyrinogen I + 4 H(+) = coproporphyrinogen I + 4 CO2. The protein operates within porphyrin-containing compound metabolism; protoporphyrin-IX biosynthesis; coproporphyrinogen-III from 5-aminolevulinate: step 4/4. Catalyzes the sequential decarboxylation of four acetate groups of uroporphyrinogen-III (octacarboxyporphyrin) to yield coproporphyrinogen-III (tetracarboxyporphyrin) with the formation of intermediate hepta-, hexa- and penta-carboxylate porphyrinogens in the heme biosynthesis pathway. Acts on a number of porphyrinogens, but only coproporphyrinogen III can ultimately be converted to heme. The sequence is that of Uroporphyrinogen decarboxylase (hem12) from Schizosaccharomyces pombe (strain 972 / ATCC 24843) (Fission yeast).